A 171-amino-acid polypeptide reads, in one-letter code: Macro domain-containing protein RSc0334 (171 aa).

The 171-residue stretch at 1–171 (MPIPTVTLRA…LYETALNEAR (171 aa)) folds into the Macro domain.

The protein belongs to the MacroD-type family.

This chain is Macro domain-containing protein RSc0334, found in Ralstonia nicotianae (strain ATCC BAA-1114 / GMI1000) (Ralstonia solanacearum).